The primary structure comprises 994 residues: Transposase for transposon Tn2501 (994 aa).

It belongs to the transposase 7 family.

Its function is as follows. Required for transposition of transposon Tn2501. The polypeptide is Transposase for transposon Tn2501 (tnpA) (Escherichia coli).